We begin with the raw amino-acid sequence, 166 residues long: Thiamine precursor transporter HmpT (166 aa).

5 consecutive transmembrane segments (helical) span residues 14-34 (LLAI…FPIP), 35-55 (GSAG…VFLF), 62-82 (IIGG…NYMF), 105-125 (FLLS…LMYG), and 126-146 (WGSA…GFVL).

In terms of assembly, in E.coli forms a stable energy-coupling factor (ECF) transporter complex composed of 2 membrane-embedded substrate-binding protein (S component), 2 ATP-binding proteins (A and A' components) and 2 transmembrane proteins (T component), probably with a stoichiometry of 2:1:1:2. May be able to interact with more than 1 S component at a time.

Its subcellular location is the cell membrane. Probably a thiamine precursor-binding protein that interacts with the energy-coupling factor (ECF) ABC-transporter complex. Unlike classic ABC transporters this ECF transporter provides the energy necessary to transport a number of different substrates. The substrates themselves are bound by transmembrane, not extracytoplasmic soluble proteins. This Lactococcus lactis subsp. cremoris (strain MG1363) protein is Thiamine precursor transporter HmpT (hmpT).